The sequence spans 395 residues: 1-deoxy-D-xylulose 5-phosphate reductoisomerase (395 aa).

T10, G11, S12, I13, A36, and N123 together coordinate NADPH. Position 124 (K124) interacts with 1-deoxy-D-xylulose 5-phosphate. Residue E125 participates in NADPH binding. D149 lines the Mn(2+) pocket. 4 residues coordinate 1-deoxy-D-xylulose 5-phosphate: S150, E151, S185, and H208. Mn(2+) is bound at residue E151. G214 serves as a coordination point for NADPH. S221, N226, K227, and E230 together coordinate 1-deoxy-D-xylulose 5-phosphate. E230 provides a ligand contact to Mn(2+).

Belongs to the DXR family. Requires Mg(2+) as cofactor. The cofactor is Mn(2+).

The catalysed reaction is 2-C-methyl-D-erythritol 4-phosphate + NADP(+) = 1-deoxy-D-xylulose 5-phosphate + NADPH + H(+). It participates in isoprenoid biosynthesis; isopentenyl diphosphate biosynthesis via DXP pathway; isopentenyl diphosphate from 1-deoxy-D-xylulose 5-phosphate: step 1/6. Catalyzes the NADPH-dependent rearrangement and reduction of 1-deoxy-D-xylulose-5-phosphate (DXP) to 2-C-methyl-D-erythritol 4-phosphate (MEP). The polypeptide is 1-deoxy-D-xylulose 5-phosphate reductoisomerase (Shewanella amazonensis (strain ATCC BAA-1098 / SB2B)).